Consider the following 67-residue polypeptide: MMFRLTSVSCFLLVIACLNLFQVVLTSRCFPPGIYCTPYLPCCWGICCDTCRNVCHLRFGKRATFQE.

Residues 1-26 (MMFRLTSVSCFLLVIACLNLFQVVLT) form the signal peptide. 4 disulfides stabilise this stretch: Cys-29–Cys-43, Cys-36–Cys-48, Cys-42–Cys-51, and Cys-47–Cys-55. At Phe-59 the chain carries Phenylalanine amide. The propeptide occupies 63–67 (ATFQE).

Belongs to the conotoxin I2 superfamily. As to expression, expressed by the venom duct.

It localises to the secreted. Inhibits the vertebrate voltage-gated potassium channels Kv1.1/KCNA1 and Kv1.3/KCNA3. The sequence is that of Kappa-conotoxin-like 2 from Conus vexillum (Flag cone).